Reading from the N-terminus, the 156-residue chain is Small ribosomal subunit protein uS7 (156 aa).

It belongs to the universal ribosomal protein uS7 family. In terms of assembly, part of the 30S ribosomal subunit. Contacts proteins S9 and S11.

Its function is as follows. One of the primary rRNA binding proteins, it binds directly to 16S rRNA where it nucleates assembly of the head domain of the 30S subunit. Is located at the subunit interface close to the decoding center, probably blocks exit of the E-site tRNA. This chain is Small ribosomal subunit protein uS7, found in Mycoplasmopsis pulmonis (strain UAB CTIP) (Mycoplasma pulmonis).